The chain runs to 288 residues: Diaminopimelate epimerase (288 aa).

Substrate is bound by residues Asn14 and Asn67. Cys76 (proton donor) is an active-site residue. Residues Gly77–Asn78, Asn166, Asn199, and Glu217–Arg218 each bind substrate. The active-site Proton acceptor is the Cys226. A substrate-binding site is contributed by Gly227–Thr228.

It belongs to the diaminopimelate epimerase family. Homodimer.

It localises to the cytoplasm. It catalyses the reaction (2S,6S)-2,6-diaminopimelate = meso-2,6-diaminopimelate. Its pathway is amino-acid biosynthesis; L-lysine biosynthesis via DAP pathway; DL-2,6-diaminopimelate from LL-2,6-diaminopimelate: step 1/1. In terms of biological role, catalyzes the stereoinversion of LL-2,6-diaminopimelate (L,L-DAP) to meso-diaminopimelate (meso-DAP), a precursor of L-lysine and an essential component of the bacterial peptidoglycan. This is Diaminopimelate epimerase from Bacillus cytotoxicus (strain DSM 22905 / CIP 110041 / 391-98 / NVH 391-98).